Here is a 158-residue protein sequence, read N- to C-terminus: 2-C-methyl-D-erythritol 2,4-cyclodiphosphate synthase (158 aa).

Residues D9 and H11 each contribute to the a divalent metal cation site. 4-CDP-2-C-methyl-D-erythritol 2-phosphate-binding positions include 9 to 11 (DVH) and 35 to 36 (HS). H43 provides a ligand contact to a divalent metal cation. 4-CDP-2-C-methyl-D-erythritol 2-phosphate contacts are provided by residues 57–59 (DIG), 62–66 (FPDTD), 101–107 (AQKPKML), 133–136 (TTTE), F140, and R143.

It belongs to the IspF family. As to quaternary structure, homotrimer. The cofactor is a divalent metal cation.

It catalyses the reaction 4-CDP-2-C-methyl-D-erythritol 2-phosphate = 2-C-methyl-D-erythritol 2,4-cyclic diphosphate + CMP. The protein operates within isoprenoid biosynthesis; isopentenyl diphosphate biosynthesis via DXP pathway; isopentenyl diphosphate from 1-deoxy-D-xylulose 5-phosphate: step 4/6. Functionally, involved in the biosynthesis of isopentenyl diphosphate (IPP) and dimethylallyl diphosphate (DMAPP), two major building blocks of isoprenoid compounds. Catalyzes the conversion of 4-diphosphocytidyl-2-C-methyl-D-erythritol 2-phosphate (CDP-ME2P) to 2-C-methyl-D-erythritol 2,4-cyclodiphosphate (ME-CPP) with a corresponding release of cytidine 5-monophosphate (CMP). The chain is 2-C-methyl-D-erythritol 2,4-cyclodiphosphate synthase from Bacillus subtilis (strain 168).